A 160-amino-acid polypeptide reads, in one-letter code: Ribosomal RNA large subunit methyltransferase H (160 aa).

Residues Leu76, Gly108, and 127 to 132 (LGKMTW) contribute to the S-adenosyl-L-methionine site.

This sequence belongs to the RNA methyltransferase RlmH family. As to quaternary structure, homodimer.

Its subcellular location is the cytoplasm. The enzyme catalyses pseudouridine(1915) in 23S rRNA + S-adenosyl-L-methionine = N(3)-methylpseudouridine(1915) in 23S rRNA + S-adenosyl-L-homocysteine + H(+). Its function is as follows. Specifically methylates the pseudouridine at position 1915 (m3Psi1915) in 23S rRNA. The chain is Ribosomal RNA large subunit methyltransferase H from Rhizobium meliloti (strain 1021) (Ensifer meliloti).